Here is a 224-residue protein sequence, read N- to C-terminus: Phosphoglycolate phosphatase (224 aa).

Catalysis depends on Asp-10, which acts as the Nucleophile. Residues Asp-10, Asp-12, and Asp-176 each contribute to the Mg(2+) site.

This sequence belongs to the HAD-like hydrolase superfamily. CbbY/CbbZ/Gph/YieH family. The cofactor is Mg(2+).

The catalysed reaction is 2-phosphoglycolate + H2O = glycolate + phosphate. Its pathway is organic acid metabolism; glycolate biosynthesis; glycolate from 2-phosphoglycolate: step 1/1. In terms of biological role, specifically catalyzes the dephosphorylation of 2-phosphoglycolate. Is involved in the dissimilation of the intracellular 2-phosphoglycolate formed during the DNA repair of 3'-phosphoglycolate ends, a major class of DNA lesions induced by oxidative stress. This Pasteurella multocida (strain Pm70) protein is Phosphoglycolate phosphatase.